We begin with the raw amino-acid sequence, 444 residues long: Homogentisate 1,2-dioxygenase (444 aa).

The active-site Proton acceptor is the H298. The Fe cation site is built by H341 and E347. Homogentisate-binding residues include Y356 and H377. H377 is a binding site for Fe cation.

It belongs to the homogentisate dioxygenase family. In terms of assembly, hexamer; dimer of trimers. Requires Fe cation as cofactor.

It carries out the reaction homogentisate + O2 = 4-maleylacetoacetate + H(+). It participates in amino-acid degradation; L-phenylalanine degradation; acetoacetate and fumarate from L-phenylalanine: step 4/6. Its function is as follows. Involved in the catabolism of homogentisate (2,5-dihydroxyphenylacetate or 2,5-OH-PhAc), a central intermediate in the degradation of phenylalanine and tyrosine. Catalyzes the oxidative ring cleavage of the aromatic ring of homogentisate to yield maleylacetoacetate. This chain is Homogentisate 1,2-dioxygenase, found in Burkholderia ambifaria (strain MC40-6).